The following is a 453-amino-acid chain: UDP-glycosyltransferase 79B3 (453 aa).

UDP-alpha-D-glucose-binding positions include S266, 325–327 (VQQ), 342–350 (HCGFGSMWE), and 364–367 (LGDQ).

It belongs to the UDP-glycosyltransferase family.

In Arabidopsis thaliana (Mouse-ear cress), this protein is UDP-glycosyltransferase 79B3 (UGT79B3).